Here is a 462-residue protein sequence, read N- to C-terminus: Solute carrier family 41 member 3 (462 aa).

A run of 9 helical transmembrane segments spans residues Cys41–Met61, Leu121–Met141, Val163–Gly183, Ile194–Met214, Trp225–Ile245, Tyr258–Ser278, Val351–Glu371, Ile380–Ala400, and Gly424–Leu444.

It belongs to the SLC41A transporter family.

The protein resides in the mitochondrion inner membrane. The catalysed reaction is Mg(2+)(in) + 2 Na(+)(out) = Mg(2+)(out) + 2 Na(+)(in). In terms of biological role, na(+)/Mg(2+) ion exchanger that acts as a predominant Mg(2+) efflux system at the mitochondrial inner membrane. In Rattus norvegicus (Rat), this protein is Solute carrier family 41 member 3 (Slc41a3).